Consider the following 90-residue polypeptide: Putative defensin-like protein 64 (90 aa).

The N-terminal stretch at 1 to 23 (MWGRQIVLKIFFLVLSCVIVIET) is a signal peptide. 2 cysteine pairs are disulfide-bonded: Cys-33–Cys-56 and Cys-42–Cys-77.

The protein belongs to the DEFL family.

Its subcellular location is the secreted. This is Putative defensin-like protein 64 from Arabidopsis thaliana (Mouse-ear cress).